The sequence spans 436 residues: 3-ketoacyl-CoA thiolase (436 aa).

The active-site Acyl-thioester intermediate is the cysteine 99. Catalysis depends on proton acceptor residues histidine 392 and cysteine 422.

It belongs to the thiolase-like superfamily. Thiolase family. Heterotetramer of two alpha chains (FadJ) and two beta chains (FadI).

Its subcellular location is the cytoplasm. The enzyme catalyses an acyl-CoA + acetyl-CoA = a 3-oxoacyl-CoA + CoA. The protein operates within lipid metabolism; fatty acid beta-oxidation. Its function is as follows. Catalyzes the final step of fatty acid oxidation in which acetyl-CoA is released and the CoA ester of a fatty acid two carbons shorter is formed. This Salmonella choleraesuis (strain SC-B67) protein is 3-ketoacyl-CoA thiolase.